A 391-amino-acid chain; its full sequence is Carbamoyl phosphate synthase small chain (391 aa).

Positions M1–K187 are CPSase. Residues S50, G239, and G241 each coordinate L-glutamine. In terms of domain architecture, Glutamine amidotransferase type-1 spans R191 to A376. C266 (nucleophile) is an active-site residue. Positions 267, 270, 308, 310, and 311 each coordinate L-glutamine. Catalysis depends on residues H349 and E351.

It belongs to the CarA family. In terms of assembly, composed of two chains; the small (or glutamine) chain promotes the hydrolysis of glutamine to ammonia, which is used by the large (or ammonia) chain to synthesize carbamoyl phosphate. Tetramer of heterodimers (alpha,beta)4.

It carries out the reaction hydrogencarbonate + L-glutamine + 2 ATP + H2O = carbamoyl phosphate + L-glutamate + 2 ADP + phosphate + 2 H(+). The catalysed reaction is L-glutamine + H2O = L-glutamate + NH4(+). The protein operates within amino-acid biosynthesis; L-arginine biosynthesis; carbamoyl phosphate from bicarbonate: step 1/1. Its pathway is pyrimidine metabolism; UMP biosynthesis via de novo pathway; (S)-dihydroorotate from bicarbonate: step 1/3. Its function is as follows. Small subunit of the glutamine-dependent carbamoyl phosphate synthetase (CPSase). CPSase catalyzes the formation of carbamoyl phosphate from the ammonia moiety of glutamine, carbonate, and phosphate donated by ATP, constituting the first step of 2 biosynthetic pathways, one leading to arginine and/or urea and the other to pyrimidine nucleotides. The small subunit (glutamine amidotransferase) binds and cleaves glutamine to supply the large subunit with the substrate ammonia. The sequence is that of Carbamoyl phosphate synthase small chain from Thermus thermophilus (strain ATCC BAA-163 / DSM 7039 / HB27).